The primary structure comprises 307 residues: Transcriptional repressor scratch 2 (307 aa).

The tract at residues 1–20 is SNAG domain; sequence MPRSFLVKKIKGDGFQCSGV. 2 disordered regions span residues 34 to 90 and 116 to 148; these read LPGA…PQSS and GRSRRRRGGGGGDAGGSGDAGGAGGRAGRAGAQ. The span at 124–148 shows a compositional bias: gly residues; that stretch reads GGGGDAGGSGDAGGAGGRAGRAGAQ. 4 consecutive C2H2-type zinc fingers follow at residues 155 to 177, 186 to 208, 212 to 234, and 240 to 262; these read HACAECGKTYATSSNLSRHKQTH, RKCPTCGKAYVSMPALAMHLLTH, HKCGVCGKAFSRPWLLQGHMRSH, and FGCAHCGKAFADRSNLRAHMQTH. A C2H2-type 5; atypical zinc finger spans residues 268-291; it reads YRCRQCDKSFALKSYLHKHCEAAC.

The protein belongs to the snail C2H2-type zinc-finger protein family.

Its subcellular location is the nucleus. May be involved in transcriptional regulation. The sequence is that of Transcriptional repressor scratch 2 (SCRT2) from Homo sapiens (Human).